The chain runs to 493 residues: Cytochrome P450 2E1 (493 aa).

298–303 is a substrate binding site; the sequence is FAGTET. Cys437 serves as a coordination point for heme.

The protein belongs to the cytochrome P450 family. As to quaternary structure, interacts with chaperones HSP70 and HSP90; this interaction is required for initial targeting to mitochondria. Heme serves as cofactor.

The protein localises to the endoplasmic reticulum membrane. It is found in the microsome membrane. Its subcellular location is the mitochondrion inner membrane. The enzyme catalyses an organic molecule + reduced [NADPH--hemoprotein reductase] + O2 = an alcohol + oxidized [NADPH--hemoprotein reductase] + H2O + H(+). The catalysed reaction is (5Z,8Z,11Z)-eicosatrienoate + reduced [NADPH--hemoprotein reductase] + O2 = 19-hydroxy-(5Z,8Z,11Z)-eicosatrienoate + oxidized [NADPH--hemoprotein reductase] + H2O + H(+). It carries out the reaction (5Z,8Z,11Z,14Z,17Z)-eicosapentaenoate + reduced [NADPH--hemoprotein reductase] + O2 = 19-hydroxy-(5Z,8Z,11Z,14Z,17Z)-eicosapentaenoate + oxidized [NADPH--hemoprotein reductase] + H2O + H(+). It catalyses the reaction (4Z,7Z,10Z,13Z,16Z,19Z)-docosahexaenoate + reduced [NADPH--hemoprotein reductase] + O2 = 21-hydroxy-(4Z,7Z,10Z,13Z,16Z,19Z)-docosahexaenoate + oxidized [NADPH--hemoprotein reductase] + H2O + H(+). The enzyme catalyses dodecanoate + reduced [NADPH--hemoprotein reductase] + O2 = 11-hydroxydodecanoate + oxidized [NADPH--hemoprotein reductase] + H2O + H(+). The catalysed reaction is tetradecanoate + reduced [NADPH--hemoprotein reductase] + O2 = 13-hydroxytetradecanoate + oxidized [NADPH--hemoprotein reductase] + H2O + H(+). It carries out the reaction 4-nitrophenol + NADPH + O2 + H(+) = 4-nitrocatechol + NADP(+) + H2O. Its pathway is lipid metabolism; fatty acid metabolism. With respect to regulation, the omega-1 hydroxylase activity is stimulated by cytochrome b5. Its function is as follows. A cytochrome P450 monooxygenase involved in the metabolism of fatty acids. Mechanistically, uses molecular oxygen inserting one oxygen atom into a substrate, and reducing the second into a water molecule, with two electrons provided by NADPH via cytochrome P450 reductase (NADPH--hemoprotein reductase). Catalyzes the hydroxylation of carbon-hydrogen bonds. Hydroxylates fatty acids specifically at the omega-1 position displaying the highest catalytic activity for saturated fatty acids. May be involved in the oxidative metabolism of xenobiotics. The chain is Cytochrome P450 2E1 (CYP2E1) from Oryctolagus cuniculus (Rabbit).